Reading from the N-terminus, the 81-residue chain is Photosystem I iron-sulfur center (81 aa).

2 consecutive 4Fe-4S ferredoxin-type domains span residues 2 to 31 (AHSVKIYDTCIGCTQCVRACPTDVLEMIPW) and 39 to 68 (IASAPRTEDCVGCKRCESACPTDFLSVRVY). [4Fe-4S] cluster contacts are provided by Cys-11, Cys-14, Cys-17, Cys-21, Cys-48, Cys-51, Cys-54, and Cys-58.

As to quaternary structure, the eukaryotic PSI reaction center is composed of at least 11 subunits. [4Fe-4S] cluster is required as a cofactor.

Its subcellular location is the plastid. It localises to the chloroplast thylakoid membrane. The catalysed reaction is reduced [plastocyanin] + hnu + oxidized [2Fe-2S]-[ferredoxin] = oxidized [plastocyanin] + reduced [2Fe-2S]-[ferredoxin]. Its function is as follows. Apoprotein for the two 4Fe-4S centers FA and FB of photosystem I (PSI); essential for photochemical activity. FB is the terminal electron acceptor of PSI, donating electrons to ferredoxin. The C-terminus interacts with PsaA/B/D and helps assemble the protein into the PSI complex. Required for binding of PsaD and PsaE to PSI. PSI is a plastocyanin-ferredoxin oxidoreductase, converting photonic excitation into a charge separation, which transfers an electron from the donor P700 chlorophyll pair to the spectroscopically characterized acceptors A0, A1, FX, FA and FB in turn. This chain is Photosystem I iron-sulfur center, found in Cycas taitungensis (Prince sago).